The primary structure comprises 421 residues: UDP-glucuronic acid decarboxylase 1 (421 aa).

At 1–19 (MVRTRIQRLLTGINRRMMK) the chain is on the cytoplasmic side. Residues 20 to 40 (LLIALALIAYVASVWGNFVNM) form a helical membrane-spanning segment. The Lumenal portion of the chain corresponds to 41 to 421 (SKSIQENGEQ…RVKKGRTRHN (381 aa)). The NAD(+) site is built by G99, F100, V101, D120, N121, F123, T124, G125, D145, and V146. UDP-alpha-D-glucuronate contacts are provided by L150 and Y151. NAD(+)-binding residues include L160 and S162. K178 provides a ligand contact to UDP-alpha-D-glucuronate. T179 is a binding site for NAD(+). Positions 186, 189, 192, and 193 each coordinate UDP-alpha-D-glucuronate. Positions 201, 232, and 236 each coordinate NAD(+). Residue Y232 is the Proton acceptor of the active site. 3 residues coordinate UDP-alpha-D-glucuronate: Y246, Q249, and E250. Residues T262, H268, and R273 each contribute to the NAD(+) site. N-linked (GlcNAc...) asparagine glycosylation is found at N317 and N386. The disordered stretch occupies residues 400–421 (ANNQYIPKPKPARVKKGRTRHN). Residues 409–421 (KPARVKKGRTRHN) are compositionally biased toward basic residues.

Belongs to the NAD(P)-dependent epimerase/dehydratase family. UDP-glucuronic acid decarboxylase subfamily. In terms of assembly, homodimer and homotetramer. NAD(+) serves as cofactor.

The protein localises to the golgi apparatus. Its subcellular location is the golgi stack membrane. The catalysed reaction is UDP-alpha-D-glucuronate + H(+) = UDP-alpha-D-xylose + CO2. It participates in nucleotide-sugar biosynthesis; UDP-alpha-D-xylose biosynthesis; UDP-alpha-D-xylose from UDP-alpha-D-glucuronate: step 1/1. Functionally, catalyzes the NAD-dependent decarboxylation of UDP-glucuronic acid to UDP-xylose. Necessary for the biosynthesis of the core tetrasaccharide in glycosaminoglycan biosynthesis. The sequence is that of UDP-glucuronic acid decarboxylase 1 (uxs1) from Xenopus tropicalis (Western clawed frog).